The following is a 217-amino-acid chain: Phosphate-specific transport system accessory protein PhoU homolog 2 (217 aa).

This sequence belongs to the PhoU family. In terms of assembly, homodimer.

The protein resides in the cytoplasm. Its function is as follows. Plays a role in the regulation of phosphate uptake. The protein is Phosphate-specific transport system accessory protein PhoU homolog 2 of Methanothermobacter thermautotrophicus (strain ATCC 29096 / DSM 1053 / JCM 10044 / NBRC 100330 / Delta H) (Methanobacterium thermoautotrophicum).